A 126-amino-acid chain; its full sequence is uncharacterized protein (126 aa).

The tract at residues 13–45 is disordered; sequence VAPKAGREEEQPPPPAGLGCGARGEPGRGPLEH.

It localises to the cytoplasm. The protein resides in the cytoskeleton. Its subcellular location is the cilium basal body. This is an uncharacterized protein from Homo sapiens (Human).